The following is a 156-amino-acid chain: Regulatory protein RecX (156 aa).

Belongs to the RecX family.

The protein localises to the cytoplasm. Functionally, modulates RecA activity. This is Regulatory protein RecX from Pseudomonas putida (strain ATCC 700007 / DSM 6899 / JCM 31910 / BCRC 17059 / LMG 24140 / F1).